The chain runs to 442 residues: 4-hydroxyphenylpyruvate dioxygenase (442 aa).

VOC domains lie at 45-200 (RFHH…GFEA) and 216-376 (RLDH…IFTK). H219, H301, and E387 together coordinate Fe cation.

It belongs to the 4HPPD family. It depends on Fe cation as a cofactor.

The protein resides in the cytoplasm. The catalysed reaction is 3-(4-hydroxyphenyl)pyruvate + O2 = homogentisate + CO2. It functions in the pathway amino-acid degradation; L-phenylalanine degradation; acetoacetate and fumarate from L-phenylalanine: step 3/6. Its pathway is cofactor biosynthesis; prenylquinone biosynthesis. The polypeptide is 4-hydroxyphenylpyruvate dioxygenase (Daucus carota (Wild carrot)).